The primary structure comprises 194 residues: PRELI domain containing protein 3B (194 aa).

The PRELI/MSF1 domain occupies 1–172; it reads MKIWTSEHVF…VIHKLNAEIE (172 aa). S46 and S51 each carry phosphoserine.

The protein belongs to the slowmo family.

The protein is PRELI domain containing protein 3B (PRELID3B) of Macaca fascicularis (Crab-eating macaque).